We begin with the raw amino-acid sequence, 406 residues long: Argininosuccinate synthase (406 aa).

Residues 12–20 and Ala39 each bind ATP; that span reads AYSGGLDTS. Positions 90 and 95 each coordinate L-citrulline. Gly120 contacts ATP. Thr122, Asn126, and Asp127 together coordinate L-aspartate. Asn126 serves as a coordination point for L-citrulline. 5 residues coordinate L-citrulline: Arg130, Ser179, Ser188, Glu264, and Tyr276.

Belongs to the argininosuccinate synthase family. Type 1 subfamily. In terms of assembly, homotetramer.

The protein localises to the cytoplasm. The enzyme catalyses L-citrulline + L-aspartate + ATP = 2-(N(omega)-L-arginino)succinate + AMP + diphosphate + H(+). It participates in amino-acid biosynthesis; L-arginine biosynthesis; L-arginine from L-ornithine and carbamoyl phosphate: step 2/3. The sequence is that of Argininosuccinate synthase from Geotalea daltonii (strain DSM 22248 / JCM 15807 / FRC-32) (Geobacter daltonii).